The chain runs to 140 residues: MAIQRTFSILKPDATERNITGAINALIEKAGLRIVAQKRIHMTRGQAETFYAVHKERPFFGELVDFMISGPVVVQVLEGENAIAKYRDVMGATDPSKAADGTIRKAHAKSIGENSVHGSDAPETAAIEIAQFFAGNEIVG.

ATP contacts are provided by K11, F59, R87, T93, R104, and N114. Catalysis depends on H117, which acts as the Pros-phosphohistidine intermediate.

This sequence belongs to the NDK family. Homotetramer. Mg(2+) serves as cofactor.

The protein resides in the cytoplasm. The catalysed reaction is a 2'-deoxyribonucleoside 5'-diphosphate + ATP = a 2'-deoxyribonucleoside 5'-triphosphate + ADP. It catalyses the reaction a ribonucleoside 5'-diphosphate + ATP = a ribonucleoside 5'-triphosphate + ADP. Major role in the synthesis of nucleoside triphosphates other than ATP. The ATP gamma phosphate is transferred to the NDP beta phosphate via a ping-pong mechanism, using a phosphorylated active-site intermediate. This is Nucleoside diphosphate kinase from Rhodopseudomonas palustris (strain BisB5).